Here is a 471-residue protein sequence, read N- to C-terminus: A-type ATP synthase subunit B (471 aa).

It belongs to the ATPase alpha/beta chains family. In terms of assembly, has multiple subunits with at least A(3), B(3), C, D, E, F, H, I and proteolipid K(x).

The protein localises to the cell membrane. Its function is as follows. Component of the A-type ATP synthase that produces ATP from ADP in the presence of a proton gradient across the membrane. The B chain is a regulatory subunit. This Halobacterium salinarum (strain ATCC 29341 / DSM 671 / R1) protein is A-type ATP synthase subunit B.